A 248-amino-acid chain; its full sequence is MNAVIVIPARLSSSRLKEKMLADLEGEPLIVRTWQQATKSRLASRVVVATDSERIFAVLREAGAEVVMTSPDLTCGTDRIAEAAEQVGGDVFVNLQGDEPLIDPATIDLAIAPFFGEGPLPDCTTLVFPLKPDERQIIDDPHVVKAVLDTRGNALYFSRSPIPYRRETLPDTKYYRHIGLYAFRADVLKAFVALPPSMLERAESLEQLRLLENGYRIRCIETTTDTPGVNTEEELEEVRRLFRERFGA.

The protein belongs to the KdsB family.

It localises to the cytoplasm. It carries out the reaction 3-deoxy-alpha-D-manno-oct-2-ulosonate + CTP = CMP-3-deoxy-beta-D-manno-octulosonate + diphosphate. It functions in the pathway nucleotide-sugar biosynthesis; CMP-3-deoxy-D-manno-octulosonate biosynthesis; CMP-3-deoxy-D-manno-octulosonate from 3-deoxy-D-manno-octulosonate and CTP: step 1/1. Its pathway is bacterial outer membrane biogenesis; lipopolysaccharide biosynthesis. Functionally, activates KDO (a required 8-carbon sugar) for incorporation into bacterial lipopolysaccharide in Gram-negative bacteria. This is 3-deoxy-manno-octulosonate cytidylyltransferase from Chlorobaculum tepidum (strain ATCC 49652 / DSM 12025 / NBRC 103806 / TLS) (Chlorobium tepidum).